The chain runs to 530 residues: UDP-N-acetylmuramoyl-L-alanyl-D-glutamate--2,6-diaminopimelate ligase (530 aa).

Residue L52 participates in UDP-N-acetyl-alpha-D-muramoyl-L-alanyl-D-glutamate binding. 139–145 (GTSGKTT) contributes to the ATP binding site. Residues 181–182 (TT), S208, and R216 contribute to the UDP-N-acetyl-alpha-D-muramoyl-L-alanyl-D-glutamate site. K248 bears the N6-carboxylysine mark. Meso-2,6-diaminopimelate is bound by residues R410, 434-437 (DNPR), G488, and E492. The Meso-diaminopimelate recognition motif motif lies at 434–437 (DNPR).

This sequence belongs to the MurCDEF family. MurE subfamily. The cofactor is Mg(2+). Post-translationally, carboxylation is probably crucial for Mg(2+) binding and, consequently, for the gamma-phosphate positioning of ATP.

The protein localises to the cytoplasm. The catalysed reaction is UDP-N-acetyl-alpha-D-muramoyl-L-alanyl-D-glutamate + meso-2,6-diaminopimelate + ATP = UDP-N-acetyl-alpha-D-muramoyl-L-alanyl-gamma-D-glutamyl-meso-2,6-diaminopimelate + ADP + phosphate + H(+). It functions in the pathway cell wall biogenesis; peptidoglycan biosynthesis. Its function is as follows. Catalyzes the addition of meso-diaminopimelic acid to the nucleotide precursor UDP-N-acetylmuramoyl-L-alanyl-D-glutamate (UMAG) in the biosynthesis of bacterial cell-wall peptidoglycan. The protein is UDP-N-acetylmuramoyl-L-alanyl-D-glutamate--2,6-diaminopimelate ligase of Mycobacterium leprae (strain TN).